A 251-amino-acid polypeptide reads, in one-letter code: 3-deoxy-manno-octulosonate cytidylyltransferase (251 aa).

The protein belongs to the KdsB family.

It is found in the cytoplasm. It catalyses the reaction 3-deoxy-alpha-D-manno-oct-2-ulosonate + CTP = CMP-3-deoxy-beta-D-manno-octulosonate + diphosphate. It functions in the pathway nucleotide-sugar biosynthesis; CMP-3-deoxy-D-manno-octulosonate biosynthesis; CMP-3-deoxy-D-manno-octulosonate from 3-deoxy-D-manno-octulosonate and CTP: step 1/1. Its pathway is bacterial outer membrane biogenesis; lipopolysaccharide biosynthesis. Activates KDO (a required 8-carbon sugar) for incorporation into bacterial lipopolysaccharide in Gram-negative bacteria. The protein is 3-deoxy-manno-octulosonate cytidylyltransferase of Brucella ovis (strain ATCC 25840 / 63/290 / NCTC 10512).